The following is a 94-amino-acid chain: Pyrimidine/purine nucleoside phosphorylase (94 aa).

The protein belongs to the nucleoside phosphorylase PpnP family.

It catalyses the reaction a purine D-ribonucleoside + phosphate = a purine nucleobase + alpha-D-ribose 1-phosphate. The catalysed reaction is adenosine + phosphate = alpha-D-ribose 1-phosphate + adenine. It carries out the reaction cytidine + phosphate = cytosine + alpha-D-ribose 1-phosphate. The enzyme catalyses guanosine + phosphate = alpha-D-ribose 1-phosphate + guanine. It catalyses the reaction inosine + phosphate = alpha-D-ribose 1-phosphate + hypoxanthine. The catalysed reaction is thymidine + phosphate = 2-deoxy-alpha-D-ribose 1-phosphate + thymine. It carries out the reaction uridine + phosphate = alpha-D-ribose 1-phosphate + uracil. The enzyme catalyses xanthosine + phosphate = alpha-D-ribose 1-phosphate + xanthine. In terms of biological role, catalyzes the phosphorolysis of diverse nucleosides, yielding D-ribose 1-phosphate and the respective free bases. Can use uridine, adenosine, guanosine, cytidine, thymidine, inosine and xanthosine as substrates. Also catalyzes the reverse reactions. The chain is Pyrimidine/purine nucleoside phosphorylase from Salmonella paratyphi C (strain RKS4594).